The primary structure comprises 176 residues: MSSNQQPVVLGKLGSCHGIKGWLKITAYTDSVEGIFDYSPWLIKENGEWREVKVIQWRYQGKAVVAELEGVTTRERAQMLTNCEIGILPQQMNALPEDEFYWRDLIGCEVINTTGYNMGIVDQIVETGSNDVLLVKANAKDSFGKVERMVPFVPGQFILKVDVQGKQILVDWDPDF.

The 80-residue stretch at Glu97–Phe176 folds into the PRC barrel domain.

Belongs to the RimM family. Binds ribosomal protein uS19.

It localises to the cytoplasm. Its function is as follows. An accessory protein needed during the final step in the assembly of 30S ribosomal subunit, possibly for assembly of the head region. Essential for efficient processing of 16S rRNA. May be needed both before and after RbfA during the maturation of 16S rRNA. It has affinity for free ribosomal 30S subunits but not for 70S ribosomes. The polypeptide is Ribosome maturation factor RimM (Shewanella oneidensis (strain ATCC 700550 / JCM 31522 / CIP 106686 / LMG 19005 / NCIMB 14063 / MR-1)).